We begin with the raw amino-acid sequence, 183 residues long: Disulfide bond formation protein B 2 (183 aa).

Topologically, residues 1 to 9 are cytoplasmic; it reads MSLACSRSL. A helical membrane pass occupies residues 10 to 26; it reads FFMAFTAGILALGASYY. Over 27–44 the chain is Periplasmic; it reads LEYAVGLVPCSLCLVQRL. Residues cysteine 36 and cysteine 39 are joined by a disulfide bond. Residues 45 to 61 form a helical membrane-spanning segment; it reads FMSVLTLCCGLAAVHGP. Over 62–68 the chain is Cytoplasmic; the sequence is QRVGLSL. The helical transmembrane segment at 69–85 threads the bilayer; that stretch reads YWMVTLLSSLGGTTAAW. At 86–142 the chain is on the periplasmic side; the sequence is RQVLFQSDSLQELAHCAPNPEEMFSSLPWLCALMRMFNDTADCAELSWTLFDLSIPE. The cysteines at positions 101 and 128 are disulfide-linked. Residues 143–161 form a helical membrane-spanning segment; sequence WSLLFFVGMSILAVYQLLR. Residues 162–183 are Cytoplasmic-facing; that stretch reads QVWMALQRPLSGQPSHPALVRD.

This sequence belongs to the DsbB family.

It is found in the cell inner membrane. Required for disulfide bond formation in some periplasmic proteins. Acts by oxidizing the DsbA protein. This chain is Disulfide bond formation protein B 2, found in Pseudomonas fluorescens (strain Pf0-1).